The following is a 306-amino-acid chain: Diacylglycerol kinase (306 aa).

Positions 1 to 132 constitute a DAGKc domain; that stretch reads MRKRARIIYN…VDIGKMNSRY (132 aa). ATP contacts are provided by residues 10–14, Thr-41, 67–73, and Thr-94; these read NPTSG and GDGTLNE. Mg(2+) contacts are provided by Arg-213, Asp-216, and Tyr-218. Glu-273 functions as the Proton acceptor in the catalytic mechanism.

This sequence belongs to the diacylglycerol/lipid kinase family. Homodimer. Mg(2+) serves as cofactor.

The enzyme catalyses a 1,2-diacyl-sn-glycerol + ATP = a 1,2-diacyl-sn-glycero-3-phosphate + ADP + H(+). Functionally, catalyzes the phosphorylation of diacylglycerol (DAG) into phosphatidic acid. Is a key enzyme involved in the production of lipoteichoic acid by reintroducing DAG formed from the breakdown of membrane phospholipids into the phosphatidylglycerol biosynthetic pathway. The polypeptide is Diacylglycerol kinase (dagK) (Staphylococcus carnosus (strain TM300)).